The chain runs to 153 residues: MAEQEFRHMVRITRKDVDGNSTIATALTEIRGIGKAFAIAICKVLDLDQDAQIGYIDDESVKQIEAVLENPQEFGIPEWFLNRRNDYETGETKHLIESDLNMTLRDDLNRMKMIRSYKGKRHEVGLPVRGQRTKSTFRHGSSVGVSRTRPTGN.

Residues 129–153 (RGQRTKSTFRHGSSVGVSRTRPTGN) are disordered. The span at 143–153 (VGVSRTRPTGN) shows a compositional bias: polar residues.

It belongs to the universal ribosomal protein uS13 family. In terms of assembly, part of the 30S ribosomal subunit. Forms a loose heterodimer with protein S19. Forms two bridges to the 50S subunit in the 70S ribosome.

Located at the top of the head of the 30S subunit, it contacts several helices of the 16S rRNA. In the 70S ribosome it contacts the 23S rRNA (bridge B1a) and protein L5 of the 50S subunit (bridge B1b), connecting the 2 subunits; these bridges are implicated in subunit movement. This is Small ribosomal subunit protein uS13 from Methanosphaera stadtmanae (strain ATCC 43021 / DSM 3091 / JCM 11832 / MCB-3).